A 47-amino-acid chain; its full sequence is Trifunctional NAD biosynthesis/regulator protein NadR (47 aa).

Positions 7 to 47 (LKSAIKQKGCTLDEVAEPSGMTKGYLSQLLNRKIKARARRS) constitute an HTH cro/C1-type domain. A DNA-binding region (H-T-H motif) is located at residues 18 to 37 (LDEVAEPSGMTKGYLSQLLN).

The protein resides in the cell membrane. It localises to the cytoplasm. The enzyme catalyses beta-nicotinamide D-ribonucleotide + ATP + H(+) = diphosphate + NAD(+). The catalysed reaction is beta-nicotinamide D-riboside + ATP = beta-nicotinamide D-ribonucleotide + ADP + H(+). Its pathway is cofactor biosynthesis; NAD(+) biosynthesis [regulation]. It participates in cofactor biosynthesis; NAD(+) biosynthesis; NAD(+) from nicotinamide D-ribonucleotide: step 1/1. Its function is as follows. This enzyme has three activities: DNA binding, nicotinamide mononucleotide (NMN) adenylyltransferase and ribosylnicotinamide (RN) kinase. The DNA-binding domain binds to the nadB operator sequence in an NAD- and ATP-dependent manner. As NAD levels increase within the cell, the affinity of NadR for the nadB operator regions of nadA, nadB, and pncB increases, repressing the transcription of these genes. The RN kinase activity catalyzes the phosphorylation of RN to form nicotinamide ribonucleotide. The NMN adenylyltransferase activity catalyzes the transfer of the AMP moiety of ATP to nicotinamide ribonucleotide to form NAD(+). The NMN adenylyltransferase domain also functions as the NAD and ATP sensor. The protein is Trifunctional NAD biosynthesis/regulator protein NadR (nadR) of Klebsiella pneumoniae.